We begin with the raw amino-acid sequence, 122 residues long: uncharacterized protein (122 aa).

Residues 1–33 (MASTVAGLSMSAESLRLPLLIGVSSGMLSVSDA) form the signal peptide.

This is an uncharacterized protein from Saccharomyces cerevisiae (strain ATCC 204508 / S288c) (Baker's yeast).